The following is a 371-amino-acid chain: Putative glutamate--cysteine ligase 2 (371 aa).

Belongs to the glutamate--cysteine ligase type 2 family. YbdK subfamily.

The enzyme catalyses L-cysteine + L-glutamate + ATP = gamma-L-glutamyl-L-cysteine + ADP + phosphate + H(+). In terms of biological role, ATP-dependent carboxylate-amine ligase which exhibits weak glutamate--cysteine ligase activity. This chain is Putative glutamate--cysteine ligase 2, found in Burkholderia ambifaria (strain MC40-6).